Here is a 201-residue protein sequence, read N- to C-terminus: Retinol-binding protein 4 (201 aa).

The signal sequence occupies residues M1 to G18. Intrachain disulfides connect C22-C178, C88-C192, and C138-C147. Q116 is a substrate binding site. An Omega-N-methylarginine modification is found at R139.

The protein belongs to the calycin superfamily. Lipocalin family. As to quaternary structure, interacts with TTR. Interaction with TTR prevents its loss by filtration through the kidney glomeruli. Interacts with STRA6.

The protein localises to the secreted. Functionally, retinol-binding protein that mediates retinol transport in blood plasma. Delivers retinol from the liver stores to the peripheral tissues. Transfers the bound all-trans retinol to STRA6, that then facilitates retinol transport across the cell membrane. The polypeptide is Retinol-binding protein 4 (RBP4) (Oryctolagus cuniculus (Rabbit)).